A 109-amino-acid polypeptide reads, in one-letter code: MPLTPPPDFTKVYLSAALGVSLALVVWLLIRSTLPVVGDRDHNLPHGGWYRDGTKSVFYNSPGRLNSIEARKAPLLGQPWAIVVLLVLLIWASHKLGRPNCRACAGSHT.

The Cytoplasmic portion of the chain corresponds to 1-9 (MPLTPPPDF). A helical membrane pass occupies residues 10 to 30 (TKVYLSAALGVSLALVVWLLI). Residues 31 to 72 (RSTLPVVGDRDHNLPHGGWYRDGTKSVFYNSPGRLNSIEARK) lie on the Lumenal side of the membrane. A helical membrane pass occupies residues 73–93 (APLLGQPWAIVVLLVLLIWAS). Topologically, residues 94-109 (HKLGRPNCRACAGSHT) are cytoplasmic.

The protein belongs to the Tymovirales TGBp2 protein family.

Its subcellular location is the host endoplasmic reticulum membrane. Plays a role in viral cell-to-cell propagation, by facilitating genome transport to neighboring plant cells through plasmosdesmata,. This Solanum tuberosum (Potato) protein is Movement protein TGB2.